The sequence spans 179 residues: Large ribosomal subunit protein uL5 (179 aa).

This sequence belongs to the universal ribosomal protein uL5 family. Part of the 50S ribosomal subunit; part of the 5S rRNA/L5/L18/L25 subcomplex. Contacts the 5S rRNA and the P site tRNA. Forms a bridge to the 30S subunit in the 70S ribosome.

In terms of biological role, this is one of the proteins that bind and probably mediate the attachment of the 5S RNA into the large ribosomal subunit, where it forms part of the central protuberance. In the 70S ribosome it contacts protein S13 of the 30S subunit (bridge B1b), connecting the 2 subunits; this bridge is implicated in subunit movement. Contacts the P site tRNA; the 5S rRNA and some of its associated proteins might help stabilize positioning of ribosome-bound tRNAs. The sequence is that of Large ribosomal subunit protein uL5 from Geobacter sulfurreducens (strain ATCC 51573 / DSM 12127 / PCA).